The primary structure comprises 143 residues: MELWAQLKQAGLESSGLGPLPQALRMPPPEGNPGQALMSSGAEFGGARELLLWIWEELGNLRRVDVQLLGQLCDLGLEMGTLREELVTILEEEEEDDDEEEQEEEGEGKNCVEENKGLQGKQGEKCSGNPYPAQRLPDFEMTI.

Residues 90–106 (LEEEEEDDDEEEQEEEG) show a composition bias toward acidic residues. The disordered stretch occupies residues 90–143 (LEEEEEDDDEEEQEEEGEGKNCVEENKGLQGKQGEKCSGNPYPAQRLPDFEMTI). Residues 107 to 116 (EGKNCVEENK) are compositionally biased toward basic and acidic residues.

The sequence is that of Glutamate-rich protein 4 (Erich4) from Rattus norvegicus (Rat).